Consider the following 185-residue polypeptide: CASP-like protein 2C3 (185 aa).

The Cytoplasmic segment spans residues M1–E13. The helical transmembrane segment at G14–S34 threads the bilayer. At T35–Q53 the chain is on the extracellular side. Residues A54–L74 form a helical membrane-spanning segment. Over K75–K104 the chain is Cytoplasmic. Residues A105 to L125 form a helical membrane-spanning segment. Residues D126–Q146 are Extracellular-facing. Residues V147 to A167 traverse the membrane as a helical segment. Over S168 to H185 the chain is Cytoplasmic.

This sequence belongs to the Casparian strip membrane proteins (CASP) family. In terms of assembly, homodimer and heterodimers.

Its subcellular location is the cell membrane. The sequence is that of CASP-like protein 2C3 from Zea mays (Maize).